Consider the following 334-residue polypeptide: E3 ubiquitin-protein ligase ATL4 (334 aa).

The interval 1-20 (MESLINPSHGGGNYDSHSSS) is disordered. The chain crosses the membrane as a helical span at residues 28-48 (VLVIILILLMTLLISVSICFL). The RING-type; atypical zinc-finger motif lies at 117–159 (CAVCLSKFEPEDQLRLLPLCCHAFHADCIDIWLVSNQTCPLCR).

This sequence belongs to the RING-type zinc finger family. ATL subfamily.

The protein localises to the membrane. The catalysed reaction is S-ubiquitinyl-[E2 ubiquitin-conjugating enzyme]-L-cysteine + [acceptor protein]-L-lysine = [E2 ubiquitin-conjugating enzyme]-L-cysteine + N(6)-ubiquitinyl-[acceptor protein]-L-lysine.. The protein operates within protein modification; protein ubiquitination. In terms of biological role, E3 ubiquitin-protein ligase able to catalyze polyubiquitination with ubiquitin-conjugating enzyme E2 UBC8 in vitro. This chain is E3 ubiquitin-protein ligase ATL4, found in Arabidopsis thaliana (Mouse-ear cress).